We begin with the raw amino-acid sequence, 63 residues long: Large ribosomal subunit protein uL30 (63 aa).

Belongs to the universal ribosomal protein uL30 family. In terms of assembly, part of the 50S ribosomal subunit.

The sequence is that of Large ribosomal subunit protein uL30 from Xylella fastidiosa (strain 9a5c).